The sequence spans 81 residues: MEVMRVRSDLIATRRIPGLKNISLRVMEDATGKVSVACDPIGVPEGCWVFTISGSAARFGVGDFEILTDLTIGGIIDHWVT.

Residues 1–77 (MEVMRVRSDL…TDLTIGGIID (77 aa)) form the BMV domain.

Belongs to the CcmL/EutN family. CsoS4 subfamily. As to quaternary structure, homopentamer.

Its subcellular location is the carboxysome. Functionally, probably forms vertices in the carboxysome. Has been modeled to induce curvature upon insertion into an otherwise flat hexagonal layer of major carboxysome subunits. A minor shell protein, only 12 pentamers of CsoS4A/CsoS4B are calculated to be present in each carboxysome. The 2 CsoS4 proteins contribute to the impermeability of the carboxysome to CO(2). Its central pore is probably too small to allow passage of metabolites; its function might be to anchor different proteins or metabolites to the carboxysome. In terms of biological role, unlike beta-carboxysomes, alpha-carboxysomes (Cb) can form without cargo protein. CsoS2 is essential for Cb formation and is also capable of targeting foreign proteins to the Cb. The Cb shell assembles with the aid of CsoS2; CsoS1A, CsoS1B and CsoS1C form the majority of the shell while CsoS4A and CsoS4B form vertices. CsoS1D forms pseudohexamers that probably control metabolite flux into and out of the shell. This chain is Carboxysome shell vertex protein CsoS4B, found in Halothiobacillus neapolitanus (strain ATCC 23641 / c2) (Thiobacillus neapolitanus).